The chain runs to 267 residues: Luciferase (267 aa).

The N-linked (GlcNAc...) asparagine glycan is linked to N4. A helical membrane pass occupies residues 17–39 (LSSRSIAITCGVVLASAIAFPII).

This sequence belongs to the fungal luciferase family.

Its subcellular location is the membrane. The catalysed reaction is 3-hydroxyhispidin + O2 = (E)-caffeoylpyruvate + hnu + CO2. The enzyme catalyses 3-hydroxyhispidin + O2 = 4-[(E)-2-(3,4-dihydroxyphenyl)ethenyl]-1,7-dihydroxy-2,3,5-trioxabicyclo[2.2.2]oct-7-en-6-one. In terms of biological role, luciferase; part of the gene cluster that mediates the fungal bioluminescence cycle. Uses the fungal luciferin 3-hydroxyhispidin as a substrate to produce an endoperoxide as a high-energy intermediate with decomposition that yields oxyluciferin (also known as caffeoylpyruvate) and light emission. The fungal bioluminescence cycle begins with the hispidin synthetase that catalyzes the formation of hispidin which is further hydroxylated by the hispidin-3-hydroxylase, yielding the fungal luciferin 3-hydroxyhispidin. The luciferase then produces an endoperoxide as a high-energy intermediate with decomposition that yields oxyluciferin and light emission. Oxyluciferin can be recycled to caffeic acid by caffeoylpyruvate hydrolase. The chain is Luciferase from Neonothopanus nambi (Agaricus nambi).